A 326-amino-acid chain; its full sequence is 4-hydroxythreonine-4-phosphate dehydrogenase (326 aa).

T132 contributes to the substrate binding site. A divalent metal cation-binding residues include H160, H205, and H260. 3 residues coordinate substrate: K268, N277, and R286.

The protein belongs to the PdxA family. Homodimer. Zn(2+) is required as a cofactor. Mg(2+) serves as cofactor. Requires Co(2+) as cofactor.

It localises to the cytoplasm. The catalysed reaction is 4-(phosphooxy)-L-threonine + NAD(+) = 3-amino-2-oxopropyl phosphate + CO2 + NADH. It participates in cofactor biosynthesis; pyridoxine 5'-phosphate biosynthesis; pyridoxine 5'-phosphate from D-erythrose 4-phosphate: step 4/5. In terms of biological role, catalyzes the NAD(P)-dependent oxidation of 4-(phosphooxy)-L-threonine (HTP) into 2-amino-3-oxo-4-(phosphooxy)butyric acid which spontaneously decarboxylates to form 3-amino-2-oxopropyl phosphate (AHAP). This chain is 4-hydroxythreonine-4-phosphate dehydrogenase, found in Stenotrophomonas maltophilia (strain K279a).